The sequence spans 559 residues: MAAQGFLLIASFLLILLVLAKPLGSGLARLIAAVPLPGVAGVERILWRTLGITDHEMNWRQYLLALLTLNLLGLGILFCLLFWQEWLPLNPQRLPGLSWDLALNTAVSFVTNTNWQAYSGESTLSHFSQMAGLTVQNFLSAATGIAVVFALIRAFTRQNVHTLGNAWQDLVRITLWILFPVALIIALFFIQQGVPQNLSAYQPITTLEGAKQLLPMGPVASQEAIKMLGTNGGGFFNANSSHPFENPTALTNLAQMLAIFLIPAALCFAFGEAAGDRRQGRALLWAMSFIFVVCVAVVMWAEVQGNPHLLAAGADSSVNMEGKETRFGVLASSLFAVVTTAASCGAVNAMHDSFTALGGMVPMWLMQIGEVVFGGVGSGLYGMLLFVLLAVFIAGLMIGRTPEYLGKKIDVREMKMTALAILVTPMLVLLGSALAMMTDAGRSAMLNPGPHGFSEVLYAVSSAANNNGSAFAGLSANSPFWNCLLAFCMFVGRFGVIIPVMAIAGSLVSKKVQPASQGTLATHGALFIGLLIGTVLLVGALTFIPALALGPVAEHFSLP.

The next 13 membrane-spanning stretches (helical) occupy residues glycine 5–serine 25, leucine 27–tryptophan 47, leucine 63–tryptophan 83, glycine 132–isoleucine 152, leucine 170–isoleucine 190, leucine 253–alanine 273, leucine 283–valine 303, phenylalanine 327–valine 347, alanine 356–valine 376, glycine 379–glycine 399, methionine 416–methionine 436, leucine 484–alanine 504, and glycine 524–isoleucine 544.

This sequence belongs to the KdpA family. In terms of assembly, the system is composed of three essential subunits: KdpA, KdpB and KdpC.

The protein localises to the cell inner membrane. Functionally, part of the high-affinity ATP-driven potassium transport (or Kdp) system, which catalyzes the hydrolysis of ATP coupled with the electrogenic transport of potassium into the cytoplasm. This subunit binds the periplasmic potassium ions and delivers the ions to the membrane domain of KdpB through an intramembrane tunnel. The chain is Potassium-transporting ATPase potassium-binding subunit from Salmonella choleraesuis (strain SC-B67).